The chain runs to 306 residues: uncharacterized protein (306 aa).

The interval 40–156 (HETCSTPGED…AVASASAPTE (117 aa)) is disordered. A compositionally biased stretch (low complexity) spans 64-73 (EGINLGEEGL). Residues 129-139 (KQHKKAKKRKS) are compositionally biased toward basic residues.

This is an uncharacterized protein from Rattus norvegicus (Rat).